Consider the following 345-residue polypeptide: MKRFCLWFAVFSLLLVLLPGKAFGAVDFPNTSTNGLLGFAGNAKNEKGISKASTTGGKNGQIVYIQSVNDLKTHLGGSTPKILVLQNDISASSKTTVTIGSNKTLVGSYAKKTLKNIYLTTSSASGNVIFQNLTFEHSPQINGNNDIQLYLDSGINYWIDHVTFSGHSYSASGSDLDKLLYVGKSADYITISNSKFANHKYGLILGYPDDSQHQYDGYPHMTIANNYFENLYVRGPGLMRYGYFHVKNNYSNNFNQAITIATKAKIYSEYNYFGKGSEKGGILDDKGTGYFKDTGSYPSLNKQTSPLTSWNPGSNYSYRVQTPQYTKDFVTKYAGSQSTTLVFGY.

An N-terminal signal peptide occupies residues 1 to 24 (MKRFCLWFAVFSLLLVLLPGKAFG). Residue Arg-234 is part of the active site.

It belongs to the polysaccharide lyase 1 family.

The protein localises to the secreted. The catalysed reaction is Eliminative cleavage of (1-&gt;4)-alpha-D-galacturonan methyl ester to give oligosaccharides with 4-deoxy-6-O-methyl-alpha-D-galact-4-enuronosyl groups at their non-reducing ends.. Its activity is regulated as follows. Inhibited by Hg(2+) and Mn(2+). Not affected by EDTA in vitro. Functionally, catalyzes the depolymerization of pectins of methyl esterification degree from 13 to 75%, with an endo mode of action. Cannot degrade polygalacturonate. Also displays protopectinase activity, i.e. releases pectin from protopectin. This is Pectin lyase (pelB) from Bacillus subtilis.